A 114-amino-acid polypeptide reads, in one-letter code: MVANVSGIGSVLQQMQAMAAQANGGVASPAAALAGSGAATAGTFASAMKASLDKISGDQQHALGEARAFEVGAANVSLNDVMVDMQKANIGFQFGLQVRNKLVSAYNEVMQMSV.

Belongs to the FliE family.

The protein resides in the bacterial flagellum basal body. This chain is Flagellar hook-basal body complex protein FliE, found in Burkholderia vietnamiensis (strain G4 / LMG 22486) (Burkholderia cepacia (strain R1808)).